The sequence spans 174 residues: Solute carrier family 2, facilitated glucose transporter member 4 (174 aa).

The Cytoplasmic segment spans residues 1–19 (QQIGSEDGEPPQQRVTGTL). Residues 2–8 (QIGSEDG) form an interaction with SRFBP1 region. Ser5 is subject to Phosphoserine. Residues 20-40 (VLAVFSAVLGSLQFGYNIGVI) form a helical membrane-spanning segment. At 41–76 (NAPQKVIEQSYNETWLGRQGPNGPGSIPPGTLTTLW) the chain is on the extracellular side. Residue Asn52 is glycosylated (N-linked (GlcNAc...) asparagine). The helical transmembrane segment at 77–97 (ALSVAIFSVGGMFSSFLLGII) threads the bilayer. Topologically, residues 98 to 114 (SQWLGRKKAMLFNNTLA) are cytoplasmic. Residues 115-135 (VLAGALMGLAKAAASYEMLIL) form a helical membrane-spanning segment. The Extracellular portion of the chain corresponds to 136 to 137 (GR). The chain crosses the membrane as a helical span at residues 138–158 (FLIGAYSGLASGLVPMYVGEI). Residues 159-166 (APTHLRGA) lie on the Cytoplasmic side of the membrane. A helical membrane pass occupies residues 167-174 (LGTLNQLA).

It belongs to the major facilitator superfamily. Sugar transporter (TC 2.A.1.1) family. Glucose transporter subfamily. As to quaternary structure, binds to DAXX. Interacts via its N-terminus with SRFBP1. Interacts with NDUFA9. Interacts with TRARG1; the interaction is required for proper SLC2A4 recycling after insulin stimulation. In terms of processing, sumoylated. Post-translationally, palmitoylated. Palmitoylation by ZDHHC7 controls the insulin-dependent translocation of GLUT4 to the plasma membrane.

It localises to the cell membrane. The protein localises to the endomembrane system. The protein resides in the cytoplasm. Its subcellular location is the perinuclear region. It carries out the reaction D-glucose(out) = D-glucose(in). Its function is as follows. Insulin-regulated facilitative glucose transporter, which plays a key role in removal of glucose from circulation. Response to insulin is regulated by its intracellular localization: in the absence of insulin, it is efficiently retained intracellularly within storage compartments in muscle and fat cells. Upon insulin stimulation, translocates from these compartments to the cell surface where it transports glucose from the extracellular milieu into the cell. The polypeptide is Solute carrier family 2, facilitated glucose transporter member 4 (Sus scrofa (Pig)).